We begin with the raw amino-acid sequence, 431 residues long: MAFLKLYVIVLGCAKNEADFSLFKYHLKQLGHEVVDDVEDADGVVIDTCGFIVDAKQESIDTILEFASIKKQKPDFKVYVTGCLVQRYPKDLPLEIPEVDGWFGVIPPKNLAESINKTKKYITDPVAVYEFEGRVDSDLPYAYVKIADGCDRACTFCTIPKFKGGFVSRKLEDIEKEVRYLIENGKKEIVLVAQDTTGYGVDLYGKQMLPELLKRINDIDGNFWIRVMYMHPDHVTDEILKGFSYEKVVKYFDIPIQHSSDNILKLMGRTKSTKELEELFDKIRSLYPQAVLRTSIIVGFPGETKDDFEQLIDFIRTIEFDRLGGFVYSDEEDAASYNLPNKVSLKTAQKRLDTLMEVQAEISFLRNQRLVGKVIDVLFEEEVNGVIIGRSYMDAPEVDGNVFVKGHGINRFGKVKITEADTYDLEGELVE.

The MTTase N-terminal domain maps to 4–120 (LKLYVIVLGC…LAESINKTKK (117 aa)). 6 residues coordinate [4Fe-4S] cluster: cysteine 13, cysteine 49, cysteine 83, cysteine 150, cysteine 154, and cysteine 157. Residues 136 to 365 (DSDLPYAYVK…MEVQAEISFL (230 aa)) enclose the Radical SAM core domain. A TRAM domain is found at 368-431 (QRLVGKVIDV…TYDLEGELVE (64 aa)).

This sequence belongs to the methylthiotransferase family. RimO subfamily. [4Fe-4S] cluster serves as cofactor.

The protein localises to the cytoplasm. The enzyme catalyses L-aspartate(89)-[ribosomal protein uS12]-hydrogen + (sulfur carrier)-SH + AH2 + 2 S-adenosyl-L-methionine = 3-methylsulfanyl-L-aspartate(89)-[ribosomal protein uS12]-hydrogen + (sulfur carrier)-H + 5'-deoxyadenosine + L-methionine + A + S-adenosyl-L-homocysteine + 2 H(+). Its function is as follows. Catalyzes the methylthiolation of an aspartic acid residue of ribosomal protein uS12. The protein is Ribosomal protein uS12 methylthiotransferase RimO of Fervidobacterium nodosum (strain ATCC 35602 / DSM 5306 / Rt17-B1).